A 342-amino-acid chain; its full sequence is Serine/threonine-protein kinase ISR1 (342 aa).

Residues 59 to 342 (WRLTRVLGCG…SNARVAEHAF (284 aa)) form the Protein kinase domain. ATP is bound by residues 65 to 73 (LGCGSVACV) and Lys-84. The Proton acceptor role is filled by Asp-190.

It belongs to the protein kinase superfamily. Ser/Thr protein kinase family.

It carries out the reaction L-seryl-[protein] + ATP = O-phospho-L-seryl-[protein] + ADP + H(+). It catalyses the reaction L-threonyl-[protein] + ATP = O-phospho-L-threonyl-[protein] + ADP + H(+). Its function is as follows. Probable serine/threonine protein kinase which may function redundantly with MPK1-independent branch of the PCK1 pathway. The chain is Serine/threonine-protein kinase ISR1 (ISR1) from Eremothecium gossypii (strain ATCC 10895 / CBS 109.51 / FGSC 9923 / NRRL Y-1056) (Yeast).